The chain runs to 378 residues: Actin-related protein 2/3 complex subunit 1B (378 aa).

7 WD repeats span residues 8–47, 53–92, 97–138, 143–182, 203–242, 257–295, and 331–375; these read RFAE…HWER, KHDQ…WVPT, RLNR…WVSK, RHES…VDTK, LSYS…PLAQ, ISEK…KAAS, and VHDN…QELG. Positions 319–340 are disordered; sequence TTANDASDSRGGVHDNSITSIV.

It belongs to the WD repeat ARPC1 family. Component of the Arp2/3 complex composed of ARP2, ARP3, ARPC1/p41-ARC, ARPC2/p34-ARC, ARPC3/p21-ARC, ARPC4/p20-ARC and ARPC5/p16-ARC. As to expression, expressed at low levels in all tissues with a relatively highest expression in inflorescences.

The protein localises to the cytoplasm. It is found in the cytoskeleton. Its function is as follows. Functions as a component of the Arp2/3 complex which is involved in regulation of actin polymerization and together with an activating nucleation-promoting factor (NPF) mediates the formation of branched actin networks. Arp2/3 complex plays a critical role in the control of cell morphogenesis via the modulation of cell polarity development. This chain is Actin-related protein 2/3 complex subunit 1B (ARPC1B), found in Arabidopsis thaliana (Mouse-ear cress).